Reading from the N-terminus, the 254-residue chain is 3-deoxy-manno-octulosonate cytidylyltransferase (254 aa).

This sequence belongs to the KdsB family.

It localises to the cytoplasm. The catalysed reaction is 3-deoxy-alpha-D-manno-oct-2-ulosonate + CTP = CMP-3-deoxy-beta-D-manno-octulosonate + diphosphate. Its pathway is nucleotide-sugar biosynthesis; CMP-3-deoxy-D-manno-octulosonate biosynthesis; CMP-3-deoxy-D-manno-octulosonate from 3-deoxy-D-manno-octulosonate and CTP: step 1/1. It functions in the pathway bacterial outer membrane biogenesis; lipopolysaccharide biosynthesis. In terms of biological role, activates KDO (a required 8-carbon sugar) for incorporation into bacterial lipopolysaccharide in Gram-negative bacteria. The sequence is that of 3-deoxy-manno-octulosonate cytidylyltransferase from Pseudomonas fluorescens (strain SBW25).